Reading from the N-terminus, the 206-residue chain is Large ribosomal subunit protein eL13z (206 aa).

The disordered stretch occupies residues 183-206 (ERTNKRHAGARAKRAADAEKEEKK). Residues 186 to 195 (NKRHAGARAK) show a composition bias toward basic residues. Residues 196-206 (RAADAEKEEKK) show a composition bias toward basic and acidic residues.

The protein belongs to the eukaryotic ribosomal protein eL13 family.

The polypeptide is Large ribosomal subunit protein eL13z (Brassica napus (Rape)).